The following is a 131-amino-acid chain: Small ribosomal subunit protein uS8 (131 aa).

Belongs to the universal ribosomal protein uS8 family. In terms of assembly, part of the 30S ribosomal subunit. Contacts proteins S5 and S12.

Its function is as follows. One of the primary rRNA binding proteins, it binds directly to 16S rRNA central domain where it helps coordinate assembly of the platform of the 30S subunit. The protein is Small ribosomal subunit protein uS8 of Verminephrobacter eiseniae (strain EF01-2).